The primary structure comprises 176 residues: Sperm-egg fusion protein TMEM95 (176 aa).

The signal sequence occupies residues 1–16 (MWVLALGGAFLAVAKA). Intrachain disulfides connect Cys17–Cys119, Cys20–Cys122, Cys106–Cys129, and Cys110–Cys135. The Extracellular segment spans residues 17–146 (CIFCRLQDHA…PDSHDLWDAR (130 aa)). Residues Asn36 and Asn118 are each glycosylated (N-linked (GlcNAc...) asparagine). Residues 147-167 (ILLLCIFGIVLLSGVVSLQVE) form a helical membrane-spanning segment. At 168–176 (YLNLQAKDL) the chain is on the cytoplasmic side.

The protein belongs to the TMEM95 family. As to quaternary structure, does not interact with sperm-egg fusion proteins IZUMO1 or IZUMO1R/JUNO. In terms of processing, N-glycosylated. As to expression, expressed exclusively in testis.

The protein resides in the cytoplasmic vesicle. It localises to the secretory vesicle. Its subcellular location is the acrosome membrane. Functionally, sperm protein required for fusion of sperm with the egg membrane during fertilization. The protein is Sperm-egg fusion protein TMEM95 of Mus musculus (Mouse).